A 540-amino-acid polypeptide reads, in one-letter code: Membrane protein insertase YidC (540 aa).

A run of 5 helical transmembrane segments spans residues 1-21, 351-371, 418-438, 464-484, and 497-517; these read MVVQ…MMLD, NWGI…FPLT, LGGC…YYML, ILPI…PSSI, and PLIF…YYII.

Belongs to the OXA1/ALB3/YidC family. Type 1 subfamily. In terms of assembly, interacts with the Sec translocase complex via SecD. Specifically interacts with transmembrane segments of nascent integral membrane proteins during membrane integration.

It is found in the cell membrane. Functionally, required for the insertion and/or proper folding and/or complex formation of integral membrane proteins into the membrane. Involved in integration of membrane proteins that insert both dependently and independently of the Sec translocase complex, as well as at least some lipoproteins. Aids folding of multispanning membrane proteins. The chain is Membrane protein insertase YidC from Wigglesworthia glossinidia brevipalpis.